The chain runs to 556 residues: ATP synthase subunit beta-2, mitochondrial (556 aa).

Low complexity predominate over residues 1–20 (MASRRVLSSLLRSSSGRSAA). Residues 1–37 (MASRRVLSSLLRSSSGRSAAKLVNRNPRLPSPSPARH) are disordered. Residues 1–51 (MASRRVLSSLLRSSSGRSAAKLVNRNPRLPSPSPARHAAPCSYLLGRVAEY) constitute a mitochondrion transit peptide. Ser-59 is subject to Phosphoserine. Residue 231 to 238 (GGAGVGKT) coordinates ATP.

Belongs to the ATPase alpha/beta chains family. In terms of assembly, F-type ATPases have 2 components, CF(1) - the catalytic core - and CF(0) - the membrane proton channel. CF(1) has five subunits: alpha(3), beta(3), gamma(1), delta(1), epsilon(1). CF(0) has three main subunits: a, b and c.

The protein resides in the mitochondrion. The protein localises to the mitochondrion inner membrane. The enzyme catalyses ATP + H2O + 4 H(+)(in) = ADP + phosphate + 5 H(+)(out). Its function is as follows. Mitochondrial membrane ATP synthase (F(1)F(0) ATP synthase or Complex V) produces ATP from ADP in the presence of a proton gradient across the membrane which is generated by electron transport complexes of the respiratory chain. F-type ATPases consist of two structural domains, F(1) - containing the extramembraneous catalytic core, and F(0) - containing the membrane proton channel, linked together by a central stalk and a peripheral stalk. During catalysis, ATP synthesis in the catalytic domain of F(1) is coupled via a rotary mechanism of the central stalk subunits to proton translocation. Subunits alpha and beta form the catalytic core in F(1). Rotation of the central stalk against the surrounding alpha(3)beta(3) subunits leads to hydrolysis of ATP in three separate catalytic sites on the beta subunits. The polypeptide is ATP synthase subunit beta-2, mitochondrial (Arabidopsis thaliana (Mouse-ear cress)).